The chain runs to 455 residues: Bleomycin hydrolase (455 aa).

An N-acetylmethionine modification is found at Met1. Residues Cys73 and His372 contribute to the active site. Lys391 carries the N6-acetyllysine modification. Asn396 is an active-site residue.

The protein belongs to the peptidase C1 family. In terms of assembly, homohexamer. Interacts with NUDT12 (via ANK repeats).

Its subcellular location is the cytoplasm. It localises to the cytoplasmic granule. The enzyme catalyses Inactivates bleomycin B2 (a cytotoxic glycometallopeptide) by hydrolysis of a carboxyamide bond of beta-aminoalanine, but also shows general aminopeptidase activity. The specificity varies somewhat with source, but amino acid arylamides of Met, Leu and Ala are preferred.. In terms of biological role, the normal physiological role of BLM hydrolase is unknown, but it catalyzes the inactivation of the antitumor drug BLM (a glycopeptide) by hydrolyzing the carboxamide bond of its B-aminoalaninamide moiety thus protecting normal and malignant cells from BLM toxicity. This chain is Bleomycin hydrolase (BLMH), found in Homo sapiens (Human).